A 636-amino-acid chain; its full sequence is 1-deoxy-D-xylulose-5-phosphate synthase (636 aa).

Thiamine diphosphate-binding positions include His-75 and 116 to 118 (AHS). Position 147 (Asp-147) interacts with Mg(2+). Thiamine diphosphate-binding positions include 148-149 (GA), Asn-177, Tyr-288, and Glu-370. Residue Asn-177 participates in Mg(2+) binding.

The protein belongs to the transketolase family. DXPS subfamily. In terms of assembly, homodimer. Mg(2+) is required as a cofactor. It depends on thiamine diphosphate as a cofactor.

It catalyses the reaction D-glyceraldehyde 3-phosphate + pyruvate + H(+) = 1-deoxy-D-xylulose 5-phosphate + CO2. The protein operates within metabolic intermediate biosynthesis; 1-deoxy-D-xylulose 5-phosphate biosynthesis; 1-deoxy-D-xylulose 5-phosphate from D-glyceraldehyde 3-phosphate and pyruvate: step 1/1. Catalyzes the acyloin condensation reaction between C atoms 2 and 3 of pyruvate and glyceraldehyde 3-phosphate to yield 1-deoxy-D-xylulose-5-phosphate (DXP). The polypeptide is 1-deoxy-D-xylulose-5-phosphate synthase (Ralstonia nicotianae (strain ATCC BAA-1114 / GMI1000) (Ralstonia solanacearum)).